The sequence spans 52 residues: Gene 5.9 protein (52 aa).

This chain is Gene 5.9 protein (5.9), found in Enterobacteria phage T3 (Bacteriophage T3).